Here is a 233-residue protein sequence, read N- to C-terminus: NADP-dependent glyceraldehyde-3-phosphate dehydrogenase (233 aa).

Substrate is bound at residue Asn7–Tyr8. The NADP(+) site is built by Lys30 and Ser33. Gly83 to Gly87 contacts NAD(+). Glu102 acts as the Proton acceptor in catalysis. Residue Arg135–Thr137 participates in substrate binding. Residue Cys136 is the Nucleophile of the active site. NADP(+) is bound by residues Glu180 and Glu229.

This sequence belongs to the aldehyde dehydrogenase family.

The protein resides in the cytoplasm. It catalyses the reaction D-glyceraldehyde 3-phosphate + NADP(+) + H2O = (2R)-3-phosphoglycerate + NADPH + 2 H(+). Functionally, important as a means of generating NADPH for biosynthetic reactions. The sequence is that of NADP-dependent glyceraldehyde-3-phosphate dehydrogenase (GapN) from Scenedesmus vacuolatus (Green alga).